Consider the following 221-residue polypeptide: Imidazole glycerol phosphate synthase subunit HisH (221 aa).

The Glutamine amidotransferase type-1 domain occupies 9 to 221; sequence DVVIIDTGCA…QILGNFLKMQ (213 aa). C84 serves as the catalytic Nucleophile. Catalysis depends on residues H202 and E204.

Heterodimer of HisH and HisF.

The protein resides in the cytoplasm. The enzyme catalyses 5-[(5-phospho-1-deoxy-D-ribulos-1-ylimino)methylamino]-1-(5-phospho-beta-D-ribosyl)imidazole-4-carboxamide + L-glutamine = D-erythro-1-(imidazol-4-yl)glycerol 3-phosphate + 5-amino-1-(5-phospho-beta-D-ribosyl)imidazole-4-carboxamide + L-glutamate + H(+). The catalysed reaction is L-glutamine + H2O = L-glutamate + NH4(+). Its pathway is amino-acid biosynthesis; L-histidine biosynthesis; L-histidine from 5-phospho-alpha-D-ribose 1-diphosphate: step 5/9. Its function is as follows. IGPS catalyzes the conversion of PRFAR and glutamine to IGP, AICAR and glutamate. The HisH subunit catalyzes the hydrolysis of glutamine to glutamate and ammonia as part of the synthesis of IGP and AICAR. The resulting ammonia molecule is channeled to the active site of HisF. This is Imidazole glycerol phosphate synthase subunit HisH from Shewanella oneidensis (strain ATCC 700550 / JCM 31522 / CIP 106686 / LMG 19005 / NCIMB 14063 / MR-1).